The following is an 87-amino-acid chain: Large ribosomal subunit protein bL31B (87 aa).

The protein belongs to the bacterial ribosomal protein bL31 family. Type B subfamily. Part of the 50S ribosomal subunit.

The polypeptide is Large ribosomal subunit protein bL31B (Corynebacterium kroppenstedtii (strain DSM 44385 / JCM 11950 / CIP 105744 / CCUG 35717)).